Here is a 306-residue protein sequence, read N- to C-terminus: Acetyl-coenzyme A carboxylase carboxyl transferase subunit beta (306 aa).

A CoA carboxyltransferase N-terminal domain is found at Leu-28–Val-297. The interval Gln-287–Ala-306 is disordered. Residues Pro-296 to Ala-306 show a composition bias toward pro residues.

Belongs to the AccD/PCCB family. Acetyl-CoA carboxylase is a heterohexamer composed of biotin carboxyl carrier protein (AccB), biotin carboxylase (AccC) and two subunits each of ACCase subunit alpha (AccA) and ACCase subunit beta (AccD).

Its subcellular location is the cytoplasm. It catalyses the reaction N(6)-carboxybiotinyl-L-lysyl-[protein] + acetyl-CoA = N(6)-biotinyl-L-lysyl-[protein] + malonyl-CoA. It participates in lipid metabolism; malonyl-CoA biosynthesis; malonyl-CoA from acetyl-CoA: step 1/1. In terms of biological role, component of the acetyl coenzyme A carboxylase (ACC) complex. Biotin carboxylase (BC) catalyzes the carboxylation of biotin on its carrier protein (BCCP) and then the CO(2) group is transferred by the transcarboxylase to acetyl-CoA to form malonyl-CoA. The chain is Acetyl-coenzyme A carboxylase carboxyl transferase subunit beta from Methylorubrum populi (strain ATCC BAA-705 / NCIMB 13946 / BJ001) (Methylobacterium populi).